The chain runs to 499 residues: Probable 2-isopropylmalate synthase (499 aa).

The region spanning 5 to 256 (VRIFDTTLRD…ELDVRTEMLV (252 aa)) is the Pyruvate carboxyltransferase domain. Residues Asp-14, His-194, His-196, and Asn-230 each contribute to the a divalent metal cation site.

The protein belongs to the alpha-IPM synthase/homocitrate synthase family. Homodimer. Requires a divalent metal cation as cofactor.

The enzyme catalyses 3-methyl-2-oxobutanoate + acetyl-CoA + H2O = (2S)-2-isopropylmalate + CoA + H(+). Its pathway is amino-acid biosynthesis; L-leucine biosynthesis; L-leucine from 3-methyl-2-oxobutanoate: step 1/4. Functionally, catalyzes the condensation of the acetyl group of acetyl-CoA with 3-methyl-2-oxobutanoate (2-oxoisovalerate) to form 3-carboxy-3-hydroxy-4-methylpentanoate (2-isopropylmalate). In Methanopyrus kandleri (strain AV19 / DSM 6324 / JCM 9639 / NBRC 100938), this protein is Probable 2-isopropylmalate synthase (leuA).